The sequence spans 365 residues: Flagellar P-ring protein (365 aa).

Residues 1 to 19 form the signal peptide; it reads MMLSLCAIAGLLLAPSIQA.

This sequence belongs to the FlgI family. The basal body constitutes a major portion of the flagellar organelle and consists of four rings (L,P,S, and M) mounted on a central rod.

It is found in the periplasm. The protein resides in the bacterial flagellum basal body. Functionally, assembles around the rod to form the L-ring and probably protects the motor/basal body from shearing forces during rotation. In Sodalis glossinidius (strain morsitans), this protein is Flagellar P-ring protein.